Reading from the N-terminus, the 281-residue chain is Putative pyruvate, phosphate dikinase regulatory protein (281 aa).

ADP is bound at residue 150–157; the sequence is GVSRTSKT.

Belongs to the pyruvate, phosphate/water dikinase regulatory protein family. PDRP subfamily.

It carries out the reaction N(tele)-phospho-L-histidyl/L-threonyl-[pyruvate, phosphate dikinase] + ADP = N(tele)-phospho-L-histidyl/O-phospho-L-threonyl-[pyruvate, phosphate dikinase] + AMP + H(+). The enzyme catalyses N(tele)-phospho-L-histidyl/O-phospho-L-threonyl-[pyruvate, phosphate dikinase] + phosphate + H(+) = N(tele)-phospho-L-histidyl/L-threonyl-[pyruvate, phosphate dikinase] + diphosphate. Functionally, bifunctional serine/threonine kinase and phosphorylase involved in the regulation of the pyruvate, phosphate dikinase (PPDK) by catalyzing its phosphorylation/dephosphorylation. This chain is Putative pyruvate, phosphate dikinase regulatory protein, found in Sorangium cellulosum (strain So ce56) (Polyangium cellulosum (strain So ce56)).